A 201-amino-acid polypeptide reads, in one-letter code: Transgelin (201 aa).

Ala2 is modified (N-acetylalanine). The region spanning 24 to 137 (EELEERLVEW…RTLMALGSLA (114 aa)) is the Calponin-homology (CH) domain. Ser166 carries the post-translational modification Phosphoserine. Lys172 bears the N6-acetyllysine mark. One copy of the Calponin-like repeat lies at 175–200 (IGLQMGSNRGASQAGMTGYGRPRQII). Ser181 carries the post-translational modification Phosphoserine. At Arg183 the chain carries Omega-N-methylarginine.

It belongs to the calponin family.

It is found in the cytoplasm. Actin cross-linking/gelling protein. The sequence is that of Transgelin (Tagln) from Mus musculus (Mouse).